A 91-amino-acid chain; its full sequence is Ragulator complex protein LAMTOR5 homolog (91 aa).

The protein belongs to the LAMTOR5 family. Part of the Ragulator complex.

It localises to the cytoplasm. Its subcellular location is the lysosome. Functionally, regulator of the TOR pathway, a signaling cascade that promotes cell growth in response to growth factors, energy levels, and amino acids. As part of the Ragulator complex, may activate the TOR signaling cascade in response to amino acids. The sequence is that of Ragulator complex protein LAMTOR5 homolog from Ixodes scapularis (Black-legged tick).